An 861-amino-acid polypeptide reads, in one-letter code: Alpha-actinin A (861 aa).

Residues 1 to 239 (MSEEPTPVSG…VMTYVAQYYH (239 aa)) are actin-binding. 2 consecutive Calponin-homology (CH) domains span residues 22-127 (ITQK…LRFA) and 136-242 (LSAK…HHFS). Spectrin repeat units follow at residues 240–365 (HFSA…ALEK), 366–480 (AEQE…TGVK), 481–601 (SSAE…EERK), and 602–714 (VQLA…EQVV). 2 EF-hand domains span residues 729–764 (EELS…IGDE) and 765–800 (LTEE…SRKG). Ca(2+) contacts are provided by Asp742, Asp744, Asp746, Lys748, Glu753, Asp778, Asp780, Asn782, Thr784, and Glu789.

The protein belongs to the alpha-actinin family. In terms of assembly, homodimer; antiparallel.

The protein localises to the cytoplasm. It localises to the cell cortex. The protein resides in the contractile vacuole. Its subcellular location is the cytoplasmic vesicle. It is found in the phagosome. F-actin cross-linking protein which is thought to anchor actin to a variety of intracellular structures. This is a bundling protein. Increases the actin-stimulated ATPase activity of myosin. Involved in vegetative cell growth, phagocytosis, motility and development, probably through stabilization of the actin network in the cortical cytoskeleton. This Dictyostelium discoideum (Social amoeba) protein is Alpha-actinin A (abpA).